A 251-amino-acid chain; its full sequence is Triosephosphate isomerase (251 aa).

9–11 (NWK) contacts substrate. Residue histidine 95 is the Electrophile of the active site. The Proton acceptor role is filled by glutamate 167. Residues glycine 173, serine 212, and 233–234 (GG) each bind substrate.

It belongs to the triosephosphate isomerase family. Homodimer.

It localises to the cytoplasm. It catalyses the reaction D-glyceraldehyde 3-phosphate = dihydroxyacetone phosphate. The protein operates within carbohydrate biosynthesis; gluconeogenesis. Its pathway is carbohydrate degradation; glycolysis; D-glyceraldehyde 3-phosphate from glycerone phosphate: step 1/1. Functionally, involved in the gluconeogenesis. Catalyzes stereospecifically the conversion of dihydroxyacetone phosphate (DHAP) to D-glyceraldehyde-3-phosphate (G3P). The chain is Triosephosphate isomerase from Ectopseudomonas mendocina (strain ymp) (Pseudomonas mendocina).